Here is a 591-residue protein sequence, read N- to C-terminus: PE-PGRS family protein PE_PGRS5 (591 aa).

Positions 1–93 (MSFVIAQPEM…AGAYASAEAA (93 aa)) constitute a PE domain. The tract at residues 94 to 591 (NAGPNMLAAV…GGKGNNGNPG (498 aa)) is PGRS. Gly residues-rich tracts occupy residues 303–324 (GAGGAGGAGGDGAPGGNGGNGG), 336–363 (ASGGNGATGGNGGVGAPGGAGGNGGHVS), 371–412 (GAGG…GDGG), 477–491 (SEAGDGGKGGLGGDG), 539–567 (AGTGGDGGVGGTGAAGGKGGAGGSGGVNG), and 579–591 (GATGGKGNNGNPG). 3 disordered regions span residues 303–412 (GAGG…GDGG), 468–491 (GSVNTPIGGSEAGDGGKGGLGGDG), and 539–591 (AGTG…GNPG).

The protein belongs to the mycobacterial PE family. PGRS subfamily. In terms of assembly, interacts with human TLR4.

The protein localises to the host endoplasmic reticulum. Functionally, involved in endoplasmic reticulum (ER) stress-mediated apoptosis through human Toll-like receptor 4 (TLR4) signaling pathway. Localizes to the host ER, leading to ER stress, disruption of intracellular Ca(2+) homeostasis and increase of nitric oxide (NO) and reactive oxygen species (ROS) levels. Stress response results in caspase-8 activation and apoptosis of macrophage cells. Apoptosis may lead to dissemination of the bacteria, thereby spreading the disease. The protein is PE-PGRS family protein PE_PGRS5 of Mycobacterium tuberculosis (strain ATCC 25618 / H37Rv).